The sequence spans 319 residues: Ribosomal RNA small subunit methyltransferase H (319 aa).

Residues 38 to 40 (GGH), Asp-58, Phe-82, Asp-104, and Gln-111 contribute to the S-adenosyl-L-methionine site.

The protein belongs to the methyltransferase superfamily. RsmH family.

Its subcellular location is the cytoplasm. The enzyme catalyses cytidine(1402) in 16S rRNA + S-adenosyl-L-methionine = N(4)-methylcytidine(1402) in 16S rRNA + S-adenosyl-L-homocysteine + H(+). Specifically methylates the N4 position of cytidine in position 1402 (C1402) of 16S rRNA. The polypeptide is Ribosomal RNA small subunit methyltransferase H (Histophilus somni (strain 129Pt) (Haemophilus somnus)).